The chain runs to 431 residues: Adenylosuccinate synthetase (431 aa).

GTP-binding positions include G13–K19 and G41–T43. D14 serves as the catalytic Proton acceptor. Residues D14 and G41 each coordinate Mg(2+). IMP contacts are provided by residues D14 to K17, N39 to H42, T130, R144, Q225, T240, and R304. H42 (proton donor) is an active-site residue. A300–R306 contributes to the substrate binding site. Residues R306, K332–D334, and S415–G417 contribute to the GTP site.

The protein belongs to the adenylosuccinate synthetase family. Homodimer. Mg(2+) serves as cofactor.

The protein resides in the cytoplasm. The enzyme catalyses IMP + L-aspartate + GTP = N(6)-(1,2-dicarboxyethyl)-AMP + GDP + phosphate + 2 H(+). The protein operates within purine metabolism; AMP biosynthesis via de novo pathway; AMP from IMP: step 1/2. Its function is as follows. Plays an important role in the de novo pathway of purine nucleotide biosynthesis. Catalyzes the first committed step in the biosynthesis of AMP from IMP. The polypeptide is Adenylosuccinate synthetase (Colwellia psychrerythraea (strain 34H / ATCC BAA-681) (Vibrio psychroerythus)).